The chain runs to 94 residues: Pyrimidine/purine nucleoside phosphorylase (94 aa).

It belongs to the nucleoside phosphorylase PpnP family.

The catalysed reaction is a purine D-ribonucleoside + phosphate = a purine nucleobase + alpha-D-ribose 1-phosphate. It catalyses the reaction adenosine + phosphate = alpha-D-ribose 1-phosphate + adenine. The enzyme catalyses cytidine + phosphate = cytosine + alpha-D-ribose 1-phosphate. It carries out the reaction guanosine + phosphate = alpha-D-ribose 1-phosphate + guanine. The catalysed reaction is inosine + phosphate = alpha-D-ribose 1-phosphate + hypoxanthine. It catalyses the reaction thymidine + phosphate = 2-deoxy-alpha-D-ribose 1-phosphate + thymine. The enzyme catalyses uridine + phosphate = alpha-D-ribose 1-phosphate + uracil. It carries out the reaction xanthosine + phosphate = alpha-D-ribose 1-phosphate + xanthine. Catalyzes the phosphorolysis of diverse nucleosides, yielding D-ribose 1-phosphate and the respective free bases. Can use uridine, adenosine, guanosine, cytidine, thymidine, inosine and xanthosine as substrates. Also catalyzes the reverse reactions. The chain is Pyrimidine/purine nucleoside phosphorylase from Salmonella typhimurium (strain LT2 / SGSC1412 / ATCC 700720).